Reading from the N-terminus, the 136-residue chain is Small ribosomal subunit protein uS9 (136 aa).

Residues 97–136 (SPDNRKPLKTEGHLSRDPRAKERRKYGLKKARKAPQFSKR) form a disordered region. Residues 98-116 (PDNRKPLKTEGHLSRDPRA) show a composition bias toward basic and acidic residues. The segment covering 117–136 (KERRKYGLKKARKAPQFSKR) has biased composition (basic residues).

The protein belongs to the universal ribosomal protein uS9 family.

This is Small ribosomal subunit protein uS9 from Prochlorococcus marinus (strain MIT 9215).